The primary structure comprises 238 residues: Fatty acid metabolism regulator protein (238 aa).

Residues 6 to 74 form the HTH gntR-type domain; the sequence is QSPAGFAEEY…HGKPTKVNNF (69 aa). The segment at residues 34 to 53 is a DNA-binding region (H-T-H motif); the sequence is ERELSELIGVTRTTLREVLQ.

Homodimer.

The protein resides in the cytoplasm. In terms of biological role, multifunctional regulator of fatty acid metabolism. The protein is Fatty acid metabolism regulator protein of Erwinia tasmaniensis (strain DSM 17950 / CFBP 7177 / CIP 109463 / NCPPB 4357 / Et1/99).